We begin with the raw amino-acid sequence, 504 residues long: Glycerol kinase (504 aa).

Residue T14 coordinates ADP. ATP-binding residues include T14, T15, and S16. T14 lines the sn-glycerol 3-phosphate pocket. Residue R18 participates in ADP binding. Residues R84, E85, Y136, and D246 each contribute to the sn-glycerol 3-phosphate site. R84, E85, Y136, D246, and Q247 together coordinate glycerol. Residues T268 and G311 each contribute to the ADP site. ATP contacts are provided by T268, G311, Q315, and G412. Residues G412 and N416 each contribute to the ADP site.

This sequence belongs to the FGGY kinase family.

The catalysed reaction is glycerol + ATP = sn-glycerol 3-phosphate + ADP + H(+). The protein operates within polyol metabolism; glycerol degradation via glycerol kinase pathway; sn-glycerol 3-phosphate from glycerol: step 1/1. Its activity is regulated as follows. Inhibited by fructose 1,6-bisphosphate (FBP). Its function is as follows. Key enzyme in the regulation of glycerol uptake and metabolism. Catalyzes the phosphorylation of glycerol to yield sn-glycerol 3-phosphate. This chain is Glycerol kinase, found in Aliivibrio salmonicida (strain LFI1238) (Vibrio salmonicida (strain LFI1238)).